Here is a 130-residue protein sequence, read N- to C-terminus: MARVTVEDCIDKVDNRFDLVLLAAHRARMISSGSQLTIDRDNDKNPVVSLREIADQTISPEDLREELVHSLQKFVEVDEPEPDTVPLIGSAGASVDADDTEVAVERMTEEELLKGLEGLAPPEEQPEEDE.

Residues 109–130 (EEELLKGLEGLAPPEEQPEEDE) form a disordered region.

This sequence belongs to the RNA polymerase subunit omega family. As to quaternary structure, the RNAP catalytic core consists of 2 alpha, 1 beta, 1 beta' and 1 omega subunit. When a sigma factor is associated with the core the holoenzyme is formed, which can initiate transcription.

It catalyses the reaction RNA(n) + a ribonucleoside 5'-triphosphate = RNA(n+1) + diphosphate. Its function is as follows. Promotes RNA polymerase assembly. Latches the N- and C-terminal regions of the beta' subunit thereby facilitating its interaction with the beta and alpha subunits. The sequence is that of DNA-directed RNA polymerase subunit omega from Rhodopseudomonas palustris (strain BisA53).